The sequence spans 134 residues: Putative nickel-responsive regulator (134 aa).

Ni(2+) contacts are provided by His-78, His-89, His-91, and Cys-97.

This sequence belongs to the transcriptional regulatory CopG/NikR family. It depends on Ni(2+) as a cofactor.

Transcriptional regulator. The sequence is that of Putative nickel-responsive regulator from Chlorobaculum parvum (strain DSM 263 / NCIMB 8327) (Chlorobium vibrioforme subsp. thiosulfatophilum).